Reading from the N-terminus, the 202-residue chain is Response regulator RamR (202 aa).

Positions 1–121 (MGEMVRIAVV…LITAVHTVAR (121 aa)) are response regulatory. An HTH luxR-type domain is found at 135–200 (LKGAEMPLTT…DAIRIVQSAG (66 aa)). A DNA-binding region (H-T-H motif) is located at residues 159–178 (IAEIAARLHLSRGTVRNYMA).

In terms of assembly, homodimer, in the absence of phosphorylation. May be phosphorylated by an unknown kinase, probably on Asp-56.

Its function is as follows. A transcription factor required for aerial hyphae formation on rich medium. Activates transcription of ramC. Might be part of a two-component regulatory system. Binds the promoter of ramC. Non-phosphorylated protein cooperatively binds multiple sites in the ramC promoter. Has not been seen to autophosphorylate using the small molecule phosphodonors phosphoramidate, acetyl phosphate or carbamoyl phosphate. Upon low expression suppresses the bald (bld, no aerial hyphae) phenotype of citA but not bldJ mutants; higher expression also suppresses the bldJ mutant as well as several other bld mutations, inducing SapB production even on media where SapB is normally not produced. Expression of the ram locus (ramA, ramB and ramR) induces rapid aerial mycelium formation in S.lividans. Overexpression suppresses the no aerial hyphae phenotype of a chaplin-negative strain, probably by inducing expression of SapB. Overexpression of RamR show there are about 280 genes having at least a threefold increase or fourfold decrease in RNA abundance versus wild-type including gene cluster SCO4072-SCO4075. The protein is Response regulator RamR of Streptomyces coelicolor (strain ATCC BAA-471 / A3(2) / M145).